Consider the following 223-residue polypeptide: Ribonuclease 3 (223 aa).

An RNase III domain is found at 3–125 (LERLQKKLGY…IIAAIYLDAG (123 aa)). E38 is a Mg(2+) binding site. D42 is an active-site residue. Mg(2+) contacts are provided by D111 and E114. E114 is an active-site residue. The region spanning 152-222 (DPKTRLQEFL…AEQVLAKLTT (71 aa)) is the DRBM domain.

This sequence belongs to the ribonuclease III family. As to quaternary structure, homodimer. Requires Mg(2+) as cofactor.

It localises to the cytoplasm. It catalyses the reaction Endonucleolytic cleavage to 5'-phosphomonoester.. Functionally, digests double-stranded RNA. Involved in the processing of primary rRNA transcript to yield the immediate precursors to the large and small rRNAs (23S and 16S). Processes some mRNAs, and tRNAs when they are encoded in the rRNA operon. Processes pre-crRNA and tracrRNA of type II CRISPR loci if present in the organism. The protein is Ribonuclease 3 of Actinobacillus pleuropneumoniae serotype 3 (strain JL03).